The sequence spans 97 residues: Large ribosomal subunit protein uL23 (97 aa).

This sequence belongs to the universal ribosomal protein uL23 family. As to quaternary structure, part of the 50S ribosomal subunit. Contacts protein L29, and trigger factor when it is bound to the ribosome.

Functionally, one of the early assembly proteins it binds 23S rRNA. One of the proteins that surrounds the polypeptide exit tunnel on the outside of the ribosome. Forms the main docking site for trigger factor binding to the ribosome. In Anaeromyxobacter dehalogenans (strain 2CP-C), this protein is Large ribosomal subunit protein uL23.